A 181-amino-acid polypeptide reads, in one-letter code: MKIDENLPNYLTIARIAAIPVIILTFYINSPLARMLGALLFVLASITDFFDGYIARKYNLVTSFGKMLDPIADKLLVGCVIIMLLKKSDVDEIPCLLILAREFLVSGLREFLALVKVSVPVSTLAKTKTFLQMFALSILVLGSKGSNIIYLDLVGEIILWIAAFLTIITGYSYFKACKKYF.

The next 4 membrane-spanning stretches (helical) occupy residues Pro-8–Ile-28, Met-35–Ala-55, Phe-64–Leu-84, and Ile-148–Ile-168.

Belongs to the CDP-alcohol phosphatidyltransferase class-I family.

It is found in the cell membrane. It catalyses the reaction a CDP-1,2-diacyl-sn-glycerol + sn-glycerol 3-phosphate = a 1,2-diacyl-sn-glycero-3-phospho-(1'-sn-glycero-3'-phosphate) + CMP + H(+). The protein operates within phospholipid metabolism; phosphatidylglycerol biosynthesis; phosphatidylglycerol from CDP-diacylglycerol: step 1/2. In terms of biological role, this protein catalyzes the committed step to the synthesis of the acidic phospholipids. The chain is CDP-diacylglycerol--glycerol-3-phosphate 3-phosphatidyltransferase (pgsA) from Rickettsia bellii (strain RML369-C).